A 322-amino-acid chain; its full sequence is Glucokinase (322 aa).

Position 10 to 15 (Gly-10 to Thr-15) interacts with ATP.

The protein belongs to the bacterial glucokinase family.

The protein localises to the cytoplasm. It carries out the reaction D-glucose + ATP = D-glucose 6-phosphate + ADP + H(+). The polypeptide is Glucokinase (Hahella chejuensis (strain KCTC 2396)).